The following is a 296-amino-acid chain: PYK10-binding protein 2 (296 aa).

A disordered region spans residues 1–20; the sequence is MAQKVEAKGGKGGNQWDDGS. N-acetylalanine is present on Ala-2. Jacalin-type lectin domains follow at residues 2–142 and 150–293; these read AQKV…YFAP and AKPL…HVRP.

The protein belongs to the jacalin lectin family. In terms of assembly, component of the PYK10 complex, at least composed of PYK10/BGLU23, BGLU21, BGLU22, JAL22, JAL23, PBP1/JAL30, PBP2/JAL31, JAL32, JAL33, JAL34, JAL35, GLL22 and GLL23.

Functionally, polymerizer-type lectin that may facilitate the correct polymerization of BGLU23/PYK10 upon tissue damage. Activates BGLU21, BGLU22 and BGLU23. The chain is PYK10-binding protein 2 (PBP2) from Arabidopsis thaliana (Mouse-ear cress).